The primary structure comprises 882 residues: Alanine--tRNA ligase (882 aa).

4 residues coordinate Zn(2+): H568, H572, C670, and H674.

Belongs to the class-II aminoacyl-tRNA synthetase family. Requires Zn(2+) as cofactor.

It is found in the cytoplasm. The catalysed reaction is tRNA(Ala) + L-alanine + ATP = L-alanyl-tRNA(Ala) + AMP + diphosphate. Catalyzes the attachment of alanine to tRNA(Ala) in a two-step reaction: alanine is first activated by ATP to form Ala-AMP and then transferred to the acceptor end of tRNA(Ala). Also edits incorrectly charged Ser-tRNA(Ala) and Gly-tRNA(Ala) via its editing domain. This chain is Alanine--tRNA ligase, found in Lactobacillus johnsonii (strain CNCM I-12250 / La1 / NCC 533).